A 678-amino-acid polypeptide reads, in one-letter code: Protein hook (678 aa).

The segment at 1-155 (MSTQNGMYYS…NIMRALQELE (155 aa)) is interaction with microtubules. The region spanning 5 to 123 (NGMYYSLLEW…RLLQLVLGCA (119 aa)) is the Calponin-homology (CH) domain. Coiled-coil stretches lie at residues 135-435 (EIMC…LKCG) and 479-589 (QTAL…AKEV).

Belongs to the hook family. As to quaternary structure, homodimer. Interacts with microtubules via its N-terminus.

It is found in the cytoplasm. Its subcellular location is the cytoskeleton. It localises to the endosome. The protein resides in the synapse. In terms of biological role, involved in endocytic trafficking by stabilizing organelles of the endocytic pathway. Probably acts as a cytoskeletal linker protein required to tether endosome vesicles to the cytoskeleton. Involved in modulation of endocytosis at stages required for down-regulation of membrane proteins that control synapse size. Not involved in synaptic vesicle recycling. Required in R7 cells for boss endocytosis into multivesicular bodies (MVBs). Has a role in regulating adult longevity. The protein is Protein hook of Drosophila virilis (Fruit fly).